We begin with the raw amino-acid sequence, 210 residues long: uncharacterized protein (210 aa).

A PfpI endopeptidase domain is found at Arg-4–Val-180. The active-site Nucleophile is the Cys-110.

The protein belongs to the peptidase C56 family.

This is an uncharacterized protein from Bacillus subtilis (strain 168).